The following is a 517-amino-acid chain: GMP synthase [glutamine-hydrolyzing] (517 aa).

The Glutamine amidotransferase type-1 domain occupies Lys11–Asn202. Cys88 serves as the catalytic Nucleophile. Residues His176 and Glu178 contribute to the active site. Positions Trp203–Arg392 constitute a GMPS ATP-PPase domain. Residue Ser230–Ser236 participates in ATP binding.

Homodimer.

It carries out the reaction XMP + L-glutamine + ATP + H2O = GMP + L-glutamate + AMP + diphosphate + 2 H(+). It functions in the pathway purine metabolism; GMP biosynthesis; GMP from XMP (L-Gln route): step 1/1. In terms of biological role, catalyzes the synthesis of GMP from XMP. This is GMP synthase [glutamine-hydrolyzing] from Lacticaseibacillus casei (strain BL23) (Lactobacillus casei).